We begin with the raw amino-acid sequence, 287 residues long: Elongation factor Ts (287 aa).

Residues 80–83 (TDFL) form an involved in Mg(2+) ion dislocation from EF-Tu region.

This sequence belongs to the EF-Ts family.

It localises to the cytoplasm. Associates with the EF-Tu.GDP complex and induces the exchange of GDP to GTP. It remains bound to the aminoacyl-tRNA.EF-Tu.GTP complex up to the GTP hydrolysis stage on the ribosome. This Pseudomonas savastanoi pv. phaseolicola (strain 1448A / Race 6) (Pseudomonas syringae pv. phaseolicola (strain 1448A / Race 6)) protein is Elongation factor Ts.